Consider the following 614-residue polypeptide: Protein NRT1/ PTR FAMILY 7.3 (614 aa).

The next 2 membrane-spanning stretches (helical) occupy residues 41-61 (WVAG…FFGV) and 87-107 (WTGT…SYWG). Thr111 bears the Phosphothreonine mark. 9 helical membrane passes run 114–134 (IFQV…YMFL), 152–172 (MMEI…YGGY), 196–216 (IAFF…SNTI), 226–246 (WALG…LFLV), 355–375 (PIWL…SLFV), 390–410 (IPPA…IFLY), 435–455 (MGIG…VECY), 515–535 (LCMM…TMVV), and 559–579 (FYFL…ACAK). Residues 592 to 614 (MQDMSDDDYDTESEEEREKDSKV) form a disordered region. Residues 593-606 (QDMSDDDYDTESEE) are compositionally biased toward acidic residues.

This sequence belongs to the major facilitator superfamily. Proton-dependent oligopeptide transporter (POT/PTR) (TC 2.A.17) family. High expression in roots. Barely detected in shoots. Expressed in root pericycle cells close to the xylem.

The protein localises to the cell membrane. Its function is as follows. Low-affinity proton-dependent bidirectional nitrate transporter. Involved in nitrate loading into xylem and not in nitrate uptake. Not involved in histidine or dipeptides transport. The chain is Protein NRT1/ PTR FAMILY 7.3 (NPF7.3) from Arabidopsis thaliana (Mouse-ear cress).